A 675-amino-acid polypeptide reads, in one-letter code: Acyl-coenzyme A oxidase 3, peroxisomal (675 aa).

The N-terminal 34 residues, 1–34, are a transit peptide targeting the peroxisome; that stretch reads MSDNRALRRAHVLANHILQSNPPSSNPSLSRELC. Residue 442 to 457 participates in FAD binding; sequence AVGGQGVKTENLVGQL.

It belongs to the acyl-CoA oxidase family. It depends on FAD as a cofactor. As to expression, most abundant in flowers and senescing rosette leaves. Lower expression in hypocotyls, stems, young rosette leaves, cotyledons, cauline leaves and root tip of young seedlings.

Its subcellular location is the peroxisome. The enzyme catalyses a 2,3-saturated acyl-CoA + O2 = a (2E)-enoyl-CoA + H2O2. It participates in lipid metabolism; peroxisomal fatty acid beta-oxidation. In terms of biological role, catalyzes the desaturation of medium-chain acyl-CoAs to 2-trans-enoyl-CoAs. Active on C8:0- to C14:0-CoA with a maximal activity on C12:0-CoA. The polypeptide is Acyl-coenzyme A oxidase 3, peroxisomal (ACX3) (Arabidopsis thaliana (Mouse-ear cress)).